The sequence spans 560 residues: Proline--tRNA ligase (560 aa).

It belongs to the class-II aminoacyl-tRNA synthetase family. ProS type 1 subfamily. Homodimer.

Its subcellular location is the cytoplasm. The enzyme catalyses tRNA(Pro) + L-proline + ATP = L-prolyl-tRNA(Pro) + AMP + diphosphate. Its function is as follows. Catalyzes the attachment of proline to tRNA(Pro) in a two-step reaction: proline is first activated by ATP to form Pro-AMP and then transferred to the acceptor end of tRNA(Pro). As ProRS can inadvertently accommodate and process non-cognate amino acids such as alanine and cysteine, to avoid such errors it has two additional distinct editing activities against alanine. One activity is designated as 'pretransfer' editing and involves the tRNA(Pro)-independent hydrolysis of activated Ala-AMP. The other activity is designated 'posttransfer' editing and involves deacylation of mischarged Ala-tRNA(Pro). The misacylated Cys-tRNA(Pro) is not edited by ProRS. This chain is Proline--tRNA ligase, found in Vesicomyosocius okutanii subsp. Calyptogena okutanii (strain HA).